A 262-amino-acid chain; its full sequence is Phosphonates import ATP-binding protein PhnC (262 aa).

The ABC transporter domain maps to 5-253; sequence IRVEKLAKTF…RFDHLYRSIN (249 aa). 37-44 serves as a coordination point for ATP; the sequence is GPSGSGKS.

This sequence belongs to the ABC transporter superfamily. Phosphonates importer (TC 3.A.1.9.1) family. The complex is composed of two ATP-binding proteins (PhnC), two transmembrane proteins (PhnE) and a solute-binding protein (PhnD).

It is found in the cell inner membrane. It catalyses the reaction phosphonate(out) + ATP + H2O = phosphonate(in) + ADP + phosphate + H(+). Its function is as follows. Part of the ABC transporter complex PhnCDE involved in phosphonates import. Responsible for energy coupling to the transport system. This Escherichia coli (strain UTI89 / UPEC) protein is Phosphonates import ATP-binding protein PhnC.